A 390-amino-acid polypeptide reads, in one-letter code: 8-amino-7-oxononanoate synthase (390 aa).

Arg19 contributes to the substrate binding site. 106–107 is a pyridoxal 5'-phosphate binding site; that stretch reads GY. His131 contributes to the substrate binding site. Pyridoxal 5'-phosphate-binding residues include Ser176, His204, and Thr233. Lys236 carries the post-translational modification N6-(pyridoxal phosphate)lysine. Thr350 contacts substrate.

This sequence belongs to the class-II pyridoxal-phosphate-dependent aminotransferase family. BioF subfamily. As to quaternary structure, homodimer. It depends on pyridoxal 5'-phosphate as a cofactor.

The enzyme catalyses 6-carboxyhexanoyl-[ACP] + L-alanine + H(+) = (8S)-8-amino-7-oxononanoate + holo-[ACP] + CO2. It functions in the pathway cofactor biosynthesis; biotin biosynthesis. In terms of biological role, catalyzes the decarboxylative condensation of pimeloyl-[acyl-carrier protein] and L-alanine to produce 8-amino-7-oxononanoate (AON), [acyl-carrier protein], and carbon dioxide. This Pseudomonas putida (strain GB-1) protein is 8-amino-7-oxononanoate synthase.